Here is a 634-residue protein sequence, read N- to C-terminus: GTP-binding protein 4 (634 aa).

Alanine 2 is subject to N-acetylalanine. Lysine 103 bears the N6-acetyllysine; alternate mark. Lysine 103 participates in a covalent cross-link: Glycyl lysine isopeptide (Lys-Gly) (interchain with G-Cter in SUMO2); alternate. Serine 122 carries the post-translational modification Phosphoserine. In terms of domain architecture, OBG-type G spans 169–340; it reads RTLLLCGYPN…VKTEACDRLL (172 aa). Residues 175–182, 221–225, and 289–292 each bind GTP; these read GYPNVGKS, DTPGI, and NKCD. Lysine 332 is covalently cross-linked (Glycyl lysine isopeptide (Lys-Gly) (interchain with G-Cter in SUMO2)). A phosphoserine mark is found at serine 468, serine 470, and serine 472. Residues 494 to 634 are disordered; it reads KILQSKEKNK…KRKAGKKDRR (141 aa). Residue lysine 534 forms a Glycyl lysine isopeptide (Lys-Gly) (interchain with G-Cter in SUMO2) linkage. Positions 544-554 are enriched in basic residues; the sequence is RRSRSVTRKRK. The residue at position 558 (serine 558) is a Phosphoserine. Low complexity predominate over residues 560–572; that stretch reads PPSSTARSRSCSR. Residues 573–585 show a composition bias toward basic and acidic residues; it reads TPRDVSGLRDVKM. Residues 586–604 show a composition bias toward basic residues; it reads VKKAKTMMKKAQKKMNRLG. Positions 605-618 are enriched in basic and acidic residues; that stretch reads KKGEADRHVFDMKP. Basic residues predominate over residues 619–634; it reads KHLLSGKRKAGKKDRR.

This sequence belongs to the TRAFAC class OBG-HflX-like GTPase superfamily. OBG GTPase family. NOG subfamily. As to quaternary structure, associates with pre-60S ribosomal particles. Interacts with MINAS-60 (product of an alternative open reading frame of RBM10). As to expression, ubiquitous.

Its subcellular location is the nucleus. The protein resides in the nucleolus. Its function is as follows. Involved in the biogenesis of the 60S ribosomal subunit. Acts as TP53 repressor, preventing TP53 stabilization and cell cycle arrest. The protein is GTP-binding protein 4 (Gtpbp4) of Mus musculus (Mouse).